Consider the following 33-residue polypeptide: YQLESQEGFVPFSVSEIEQRVTVTTGSKTVVTL.

This sequence belongs to the calycin superfamily. Fatty-acid binding protein (FABP) family. Intestine.

The protein resides in the cytoplasm. In terms of biological role, FABPs are thought to play a role in the intracellular transport of long-chain fatty acids and their acyl-CoA esters. The sequence is that of Fatty acid-binding protein, intestinal (fabp2) from Rhamdia sapo (South American catfish).